We begin with the raw amino-acid sequence, 116 residues long: uncharacterized protein (116 aa).

This sequence belongs to the BolA/IbaG family.

Its subcellular location is the mitochondrion. This is an uncharacterized protein from Schizosaccharomyces pombe (strain 972 / ATCC 24843) (Fission yeast).